The primary structure comprises 122 residues: Ribonuclease P protein component (122 aa).

It belongs to the RnpA family. Consists of a catalytic RNA component (M1 or rnpB) and a protein subunit.

It catalyses the reaction Endonucleolytic cleavage of RNA, removing 5'-extranucleotides from tRNA precursor.. RNaseP catalyzes the removal of the 5'-leader sequence from pre-tRNA to produce the mature 5'-terminus. It can also cleave other RNA substrates such as 4.5S RNA. The protein component plays an auxiliary but essential role in vivo by binding to the 5'-leader sequence and broadening the substrate specificity of the ribozyme. The protein is Ribonuclease P protein component of Oenococcus oeni (strain ATCC BAA-331 / PSU-1).